The chain runs to 1382 residues: Y' element ATP-dependent helicase protein 1 copy 4 (1382 aa).

In terms of domain architecture, Helicase ATP-binding spans 383-560 (EIYMADTPSV…LQRIGLTGLA (178 aa)). Position 396–403 (396–403 (APPGYGKT)) interacts with ATP. The Helicase C-terminal domain occupies 617–766 (KLLLALFEIE…EFYGLESKKG (150 aa)). 2 disordered regions span residues 840 to 864 (ANASTNATTNSSTNATTTASTNVRT) and 880 to 1007 (TTES…DINK). The span at 880 to 983 (TTESTNSSTN…ATTTESTNAS (104 aa)) shows a compositional bias: low complexity. The segment covering 984–1007 (AKEDANKDGNAEDNRFHPVTDINK) has biased composition (basic and acidic residues).

It belongs to the helicase family. Yeast subtelomeric Y' repeat subfamily.

Catalyzes DNA unwinding and is involved in telomerase-independent telomere maintenance. This Saccharomyces cerevisiae (strain ATCC 204508 / S288c) (Baker's yeast) protein is Y' element ATP-dependent helicase protein 1 copy 4 (YRF1-4).